A 307-amino-acid polypeptide reads, in one-letter code: 4-hydroxy-tetrahydrodipicolinate synthase (307 aa).

T57 is a binding site for pyruvate. The Proton donor/acceptor role is filled by Y145. K173 serves as the catalytic Schiff-base intermediate with substrate. V215 provides a ligand contact to pyruvate.

It belongs to the DapA family. In terms of assembly, homotetramer; dimer of dimers.

The protein localises to the cytoplasm. The enzyme catalyses L-aspartate 4-semialdehyde + pyruvate = (2S,4S)-4-hydroxy-2,3,4,5-tetrahydrodipicolinate + H2O + H(+). It participates in amino-acid biosynthesis; L-lysine biosynthesis via DAP pathway; (S)-tetrahydrodipicolinate from L-aspartate: step 3/4. In terms of biological role, catalyzes the condensation of (S)-aspartate-beta-semialdehyde [(S)-ASA] and pyruvate to 4-hydroxy-tetrahydrodipicolinate (HTPA). The protein is 4-hydroxy-tetrahydrodipicolinate synthase of Leptospira interrogans serogroup Icterohaemorrhagiae serovar copenhageni (strain Fiocruz L1-130).